The chain runs to 799 residues: Oligopeptide transporter 1 (799 aa).

2 disordered regions span residues 1–26 (MSTI…PIQI) and 43–64 (DVNN…QKFD). Residues 1–108 (MSTIYRESDS…DPTIRLNHWR (108 aa)) lie on the Extracellular side of the membrane. Residues 13 to 26 (SEPSPTPTTIPIQI) show a composition bias toward low complexity. Asn46 carries N-linked (GlcNAc...) asparagine glycosylation. 3 positions are modified to phosphothreonine: Thr48, Thr50, and Thr51. Residues 109–129 (TWFLTTVFVVVFAGVNQFFSL) form a helical membrane-spanning segment. Residues 130 to 135 (RYPSLE) are Cytoplasmic-facing. Residues 136–156 (INFLVAQVVCYPIGRILALLP) traverse the membrane as a helical segment. Over 157–177 (DWKCSKVPFFDLNPGPFTKKE) the chain is Extracellular. Residues 178–198 (HAVVTIAVALTSSTAYAMYIL) form a helical membrane-spanning segment. The Cytoplasmic segment spans residues 199-210 (NAQGSFYNMKLN). Residues 211–231 (VGYQFLLVWTSQMIGYGAAGL) traverse the membrane as a helical segment. At 232–276 (TRRWVVNPASSIWPQTLISVSLFDSLHSRKVEKTVANGWTMPRYR) the chain is on the extracellular side. A helical membrane pass occupies residues 277 to 297 (FFLIVLIGSFIWYWVPGFLFT). The Cytoplasmic portion of the chain corresponds to 298 to 313 (GLSYFNVILWGSKTRH). The helical transmembrane segment at 314–334 (NFIANTIFGTQSGLGALPITF) threads the bilayer. Over 335–359 (DYTQVSQAMSGSVFATPFYVSANTY) the chain is Extracellular. The helical transmembrane segment at 360–380 (ASVLIFFVIVLPCLYFTNTWY) threads the bilayer. Topologically, residues 381 to 428 (AKYMPVISGSTYDNTQNKYNVTKILNEDYSINLEKYKEYSPVFVPFSY) are cytoplasmic. Residues 429–449 (LLSYALNFAAVIAVFVHCILY) traverse the membrane as a helical segment. The Extracellular segment spans residues 450-482 (HGKDIVAKFKDRKNGGTDIHMRIYSKNYKDCPD). A helical transmembrane segment spans residues 483 to 503 (WWYLLLQIVMIGLGFVAVCCF). The Cytoplasmic segment spans residues 504–508 (DTKFP). A helical transmembrane segment spans residues 509 to 529 (AWAFVIAILISLVNFIPQGIL). Residues 530-540 (EAMTNQHVGLN) are Extracellular-facing. Residues 541-561 (IITELICGYMLPLRPMANLLF) traverse the membrane as a helical segment. Topologically, residues 562–590 (KLYGFIVMRQGLNLSRDLKLAMYMKVSPR) are cytoplasmic. A helical transmembrane segment spans residues 591–611 (LIFAVQIYATIISGMVNVGVQ). Topologically, residues 612–659 (EWMMHNIDGLCTTDQPNGFTCANGRTVFNASIIWSLPKYLFSSGRIYN) are extracellular. An N-linked (GlcNAc...) asparagine glycan is attached at Asn640. A helical transmembrane segment spans residues 660-680 (PLMWFFLIGLLFPLAVYAVQW). The Cytoplasmic portion of the chain corresponds to 681–736 (KFPKFKFAKHIHTPVFFTGPGNIPPSTPYNYSLFFAMSFCLNLIRKRWRAWFNKYN). The chain crosses the membrane as a helical span at residues 737–757 (FVMGAGVEAGVAISVVIIFLC). Over 758 to 799 (VQYPGGKLSWWGNNVWKRTYDNDYKKFYTLKKGETFGYDKWW) the chain is Extracellular.

This sequence belongs to the oligopeptide OPT transporter family.

It localises to the cell membrane. In terms of biological role, high affinity transporter for glutathione. Also transports tetra- and pentapeptides like the opioids leucine enkephalin (Tyr-Gly-Gly-Phe-Leu) and methionine enkephalin (Tyr-Gly-Gly_Phe-Met) across the cell membrane. This chain is Oligopeptide transporter 1 (OPT1), found in Saccharomyces cerevisiae (strain ATCC 204508 / S288c) (Baker's yeast).